The following is a 243-amino-acid chain: uncharacterized protein (243 aa).

One can recognise a VWFA domain in the interval 26–204 (RVGLVLDITG…ISDDELYDAL (179 aa)). Residues 222–243 (REQEPPAEKPKKKGFFSRLFSK) are disordered. The span at 231–243 (PKKKGFFSRLFSK) shows a compositional bias: basic residues.

This is an uncharacterized protein from Bacillus subtilis (strain 168).